The following is a 244-amino-acid chain: UDP-2,3-diacylglucosamine hydrolase (244 aa).

5 residues coordinate Mn(2+): D8, H10, D41, N79, and H114. 79–80 (NR) lines the substrate pocket. Substrate-binding residues include D122, S160, N164, K167, and H195. Mn(2+)-binding residues include H195 and H197.

Belongs to the LpxH family. Mn(2+) is required as a cofactor.

The protein resides in the cell inner membrane. The catalysed reaction is UDP-2-N,3-O-bis[(3R)-3-hydroxytetradecanoyl]-alpha-D-glucosamine + H2O = 2-N,3-O-bis[(3R)-3-hydroxytetradecanoyl]-alpha-D-glucosaminyl 1-phosphate + UMP + 2 H(+). It functions in the pathway glycolipid biosynthesis; lipid IV(A) biosynthesis; lipid IV(A) from (3R)-3-hydroxytetradecanoyl-[acyl-carrier-protein] and UDP-N-acetyl-alpha-D-glucosamine: step 4/6. Functionally, hydrolyzes the pyrophosphate bond of UDP-2,3-diacylglucosamine to yield 2,3-diacylglucosamine 1-phosphate (lipid X) and UMP by catalyzing the attack of water at the alpha-P atom. Involved in the biosynthesis of lipid A, a phosphorylated glycolipid that anchors the lipopolysaccharide to the outer membrane of the cell. The chain is UDP-2,3-diacylglucosamine hydrolase from Hahella chejuensis (strain KCTC 2396).